A 372-amino-acid chain; its full sequence is Innexin shaking-B (372 aa).

Topologically, residues 1 to 21 are cytoplasmic; that stretch reads MLDIFRGLKNLVKVSHVKTDS. Residues 22–42 traverse the membrane as a helical segment; it reads IVFRLHYSITVMILMSFSLII. Topologically, residues 43-110 are extracellular; it reads TTRQYVGNPI…PADKKHYKYY (68 aa). Residues 111–131 traverse the membrane as a helical segment; that stretch reads QWVCFCLFFQAILFYTPRWLW. The Cytoplasmic portion of the chain corresponds to 132–182; that stretch reads KSWEGGKIHALIMDLDIGICSEAEKKQKKKLLLDYLWENLRYHNWWAYRYY. Residues 183-203 traverse the membrane as a helical segment; the sequence is VCELLALINVIGQMFLMNRFF. The Extracellular portion of the chain corresponds to 204–267; sequence DGEFITFGLK…ILPLNVVNEK (64 aa). Residues 268-288 form a helical membrane-spanning segment; that stretch reads IYIFLWFWFILLTFLTLLTLI. The Cytoplasmic portion of the chain corresponds to 289 to 372; sequence YRVVIIFSPR…PGLKGEIQDA (84 aa).

The protein belongs to the pannexin family. As to quaternary structure, monomer (isoform Lethal). In terms of tissue distribution, isoform Neural is expressed in synapses of giant fibers (GF), in a large thoracic cell in location of postsynaptic target and optic lobe lamina and medulla. Isoform Lethal is expressed in embryonic mesodermal derivatives. During metamorphosis, both isoforms are dynamically expressed in pupal nervous system.

It is found in the cell membrane. The protein localises to the cell junction. Its subcellular location is the gap junction. Functionally, structural component of the gap junctions at electrical synapses in distal and mid-depth levels in the lamina. Isoform Lethal forms voltage sensitive intercellular channels through homotypic interactions. The polypeptide is Innexin shaking-B (shakB) (Drosophila melanogaster (Fruit fly)).